The sequence spans 222 residues: PKHD-type hydroxylase cce_3668 (222 aa).

Positions 78–175 (HIHSLRFSRY…RLVVVGWVHS (98 aa)) constitute a Fe2OG dioxygenase domain. Fe cation contacts are provided by histidine 96, aspartate 98, and histidine 156. Arginine 166 is a 2-oxoglutarate binding site.

The cofactor is Fe(2+). Requires L-ascorbate as cofactor.

The sequence is that of PKHD-type hydroxylase cce_3668 from Crocosphaera subtropica (strain ATCC 51142 / BH68) (Cyanothece sp. (strain ATCC 51142)).